Here is a 175-residue protein sequence, read N- to C-terminus: PE-PGRS family protein PE_PGRS8 (175 aa).

One can recognise a PE domain in the interval 1 to 93; sequence MSFVIAAPEA…AGSYAAAEAA (93 aa).

The protein belongs to the mycobacterial PE family. PGRS subfamily.

The protein resides in the secreted. The protein localises to the cell wall. Its subcellular location is the cell surface. The sequence is that of PE-PGRS family protein PE_PGRS8 from Mycobacterium tuberculosis (strain ATCC 25618 / H37Rv).